Here is a 119-residue protein sequence, read N- to C-terminus: NADH-quinone oxidoreductase subunit A (119 aa).

A run of 3 helical transmembrane segments spans residues 9–29 (VLLF…LGYV), 63–83 (LVAI…PWAV), and 88–108 (VGMA…VGFA).

This sequence belongs to the complex I subunit 3 family. NDH-1 is composed of 14 different subunits. Subunits NuoA, H, J, K, L, M, N constitute the membrane sector of the complex.

The protein localises to the cell inner membrane. It catalyses the reaction a quinone + NADH + 5 H(+)(in) = a quinol + NAD(+) + 4 H(+)(out). NDH-1 shuttles electrons from NADH, via FMN and iron-sulfur (Fe-S) centers, to quinones in the respiratory chain. The immediate electron acceptor for the enzyme in this species is believed to be ubiquinone. Couples the redox reaction to proton translocation (for every two electrons transferred, four hydrogen ions are translocated across the cytoplasmic membrane), and thus conserves the redox energy in a proton gradient. The sequence is that of NADH-quinone oxidoreductase subunit A from Verminephrobacter eiseniae (strain EF01-2).